The chain runs to 129 residues: Protein yippee-like (129 aa).

The 98-residue stretch at 12–109 folds into the Yippee domain; it reads KIYSCKHCGT…LERFKITGPD (98 aa). Zn(2+) is bound by residues cysteine 16, cysteine 19, cysteine 72, and cysteine 75.

Belongs to the yippee family.

This chain is Protein yippee-like, found in Solanum tuberosum (Potato).